The chain runs to 1196 residues: Phosphoglucan, water dikinase, chloroplastic (1196 aa).

The transit peptide at 1–54 (MESIGSHCCSSPFTFITRNSSSSLPRLVNITHRVNLSHQSHRLRNSNSRLTCTA) directs the protein to the chloroplast. At threonine 55 the chain carries N-acetylthreonine. The CBM20 domain occupies 66–166 (KKDGSGTKVR…NFSVVCHWDA (101 aa)). A disordered region spans residues 174 to 200 (PQEVGNDDDVGDGGHERDNHDVGDDRV). A compositionally biased stretch (basic and acidic residues) spans 185-200 (DGGHERDNHDVGDDRV). Histidine 759 serves as the catalytic Tele-phosphohistidine intermediate. Residues 804 to 855 (LSTEGRSRTSKSSATKKTDKNSLSKKKTDKKSLSIDDEESKPGSSSSNSLLY) are disordered.

It belongs to the PEP-utilizing enzyme family. As to quaternary structure, homodimer. Mg(2+) is required as a cofactor. As to expression, in all starch containing tissues (e.g. roots, leaves, stems, inflorescence and siliques).

The protein resides in the plastid. It is found in the chloroplast. It carries out the reaction [(1-&gt;4)-6-phospho-alpha-D-glucosyl](n) + n ATP + n H2O = [(1-&gt;4)-3,6-bisphospho-alpha-D-glucosyl](n) + n AMP + n phosphate + 2n H(+). Functionally, mediates the incorporation of phosphate into starch-like phospho-alpha-glucan, mostly at the C-3 position of glucose units. Required for starch degradation, suggesting that the phosphate content of starch regulates its degradability. This Arabidopsis thaliana (Mouse-ear cress) protein is Phosphoglucan, water dikinase, chloroplastic (GWD3).